A 214-amino-acid polypeptide reads, in one-letter code: Adenylate kinase (214 aa).

10–15 contributes to the ATP binding site; the sequence is GAGKGT. Residues 30–59 form an NMP region; that stretch reads STGDMLRAAVKAGTPLGLEAKKVMDAGQLV. AMP-binding positions include T31, R36, 57–59, 85–88, and Q92; these read QLV and GFPR. The LID stretch occupies residues 122 to 159; it reads GRRVHPGSGRVYHVVFNPPKVEGKDDVTGEDLAIRPDD. ATP contacts are provided by residues R123 and 132–133; that span reads VY. 2 residues coordinate AMP: R156 and R167. ATP is bound at residue Q200.

It belongs to the adenylate kinase family. In terms of assembly, monomer.

The protein localises to the cytoplasm. It catalyses the reaction AMP + ATP = 2 ADP. It participates in purine metabolism; AMP biosynthesis via salvage pathway; AMP from ADP: step 1/1. Functionally, catalyzes the reversible transfer of the terminal phosphate group between ATP and AMP. Plays an important role in cellular energy homeostasis and in adenine nucleotide metabolism. In Shewanella putrefaciens (strain CN-32 / ATCC BAA-453), this protein is Adenylate kinase.